We begin with the raw amino-acid sequence, 351 residues long: Flap endonuclease 1 (351 aa).

Residues 1–98 (MDLAELVEEI…QELERRKKVK (98 aa)) are N-domain. Mg(2+) contacts are provided by Asp27, Asp80, Glu154, Glu156, Asp175, Asp177, and Asp238. The tract at residues 118–260 (ELKKYAQMSI…TAYRIIKKYG (143 aa)) is I-domain. The segment at 343–351 (RQTGLDQWF) is interaction with PCNA.

The protein belongs to the XPG/RAD2 endonuclease family. FEN1 subfamily. In terms of assembly, interacts with PCNA. PCNA stimulates the nuclease activity without altering cleavage specificity. Requires Mg(2+) as cofactor.

Functionally, structure-specific nuclease with 5'-flap endonuclease and 5'-3' exonuclease activities involved in DNA replication and repair. During DNA replication, cleaves the 5'-overhanging flap structure that is generated by displacement synthesis when DNA polymerase encounters the 5'-end of a downstream Okazaki fragment. Binds the unpaired 3'-DNA end and kinks the DNA to facilitate 5' cleavage specificity. Cleaves one nucleotide into the double-stranded DNA from the junction in flap DNA, leaving a nick for ligation. Also involved in the base excision repair (BER) pathway. Acts as a genome stabilization factor that prevents flaps from equilibrating into structures that lead to duplications and deletions. Also possesses 5'-3' exonuclease activity on nicked or gapped double-stranded DNA. In Sulfurisphaera tokodaii (strain DSM 16993 / JCM 10545 / NBRC 100140 / 7) (Sulfolobus tokodaii), this protein is Flap endonuclease 1.